Reading from the N-terminus, the 200-residue chain is Putative NAD(P)H nitroreductase Spy0809 (200 aa).

Requires FMN as cofactor.

This is Putative NAD(P)H nitroreductase Spy0809 from Streptococcus pyogenes serotype M6 (strain ATCC BAA-946 / MGAS10394).